Here is a 337-residue protein sequence, read N- to C-terminus: UDP-3-O-acylglucosamine N-acyltransferase 2 (337 aa).

H238 acts as the Proton acceptor in catalysis.

Belongs to the transferase hexapeptide repeat family. LpxD subfamily. In terms of assembly, homotrimer.

It carries out the reaction a UDP-3-O-[(3R)-3-hydroxyacyl]-alpha-D-glucosamine + a (3R)-hydroxyacyl-[ACP] = a UDP-2-N,3-O-bis[(3R)-3-hydroxyacyl]-alpha-D-glucosamine + holo-[ACP] + H(+). It functions in the pathway bacterial outer membrane biogenesis; LPS lipid A biosynthesis. Catalyzes the N-acylation of UDP-3-O-acylglucosamine using 3-hydroxyacyl-ACP as the acyl donor. Is involved in the biosynthesis of lipid A, a phosphorylated glycolipid that anchors the lipopolysaccharide to the outer membrane of the cell. In Francisella tularensis subsp. tularensis (strain FSC 198), this protein is UDP-3-O-acylglucosamine N-acyltransferase 2.